The following is a 210-amino-acid chain: uncharacterized protein (210 aa).

4 consecutive transmembrane segments (helical) span residues 5-25 (LAYI…TMLV), 50-70 (FWTV…VILF), 75-95 (YLGA…KSMF), and 155-175 (IILA…LVYI).

Belongs to the Rht family.

It is found in the cell membrane. This is an uncharacterized protein from Bacillus subtilis (strain 168).